The sequence spans 688 residues: Probable transcription factor gsfR1 (688 aa).

Acidic residues predominate over residues Met1–Val16. Residues Met1–Ala95 are disordered. The segment covering Arg24 to Arg36 has biased composition (polar residues). The segment covering Glu58 to Pro75 has biased composition (basic and acidic residues).

The protein resides in the nucleus. In terms of biological role, probable transcription factor that regulates expression of the gene cluster that mediates the biosynthesis of Griseofulvin, an important antifungal drug that has been in use for a long time for treating dermatophyte infections. In Penicillium aethiopicum, this protein is Probable transcription factor gsfR1.